The primary structure comprises 359 residues: CMP-N-acetylneuraminate-poly-alpha-2,8-sialyltransferase (359 aa).

Residues 1-7 (MRSIRKR) lie on the Cytoplasmic side of the membrane. Residues 8-20 (WTICTISLLLIFY) traverse the membrane as a helical; Signal-anchor for type II membrane protein segment. Topologically, residues 21–359 (KTKEIARTEE…KLTTGKCMKQ (339 aa)) are lumenal. N-linked (GlcNAc...) asparagine glycosylation is found at asparagine 50, asparagine 74, and asparagine 119. Disulfide bonds link cysteine 142–cysteine 292 and cysteine 156–cysteine 356. CMP-N-acetyl-beta-neuraminate is bound by residues asparagine 147 and asparagine 170. 2 N-linked (GlcNAc...) asparagine glycosylation sites follow: asparagine 204 and asparagine 219. Residues serine 279, threonine 280, glycine 281, and tryptophan 301 each coordinate CMP-N-acetyl-beta-neuraminate. Histidine 331 (proton donor/acceptor) is an active-site residue.

This sequence belongs to the glycosyltransferase 29 family. Autopolysialylated.

The protein localises to the golgi apparatus membrane. It is found in the secreted. The enzyme catalyses [N-acetyl-alpha-D-neuraminosyl-(2-&gt;8)](n) + CMP-N-acetyl-beta-neuraminate = [N-acetyl-alpha-D-neuraminosyl-(2-&gt;8)](n+1) + CMP + H(+). The protein operates within protein modification; protein glycosylation. Functionally, catalyzes the transfer of a sialic acid from a CMP-linked sialic acid donor onto a terminal alpha-2,3-, alpha-2,6-, or alpha-2,8-linked sialic acid of an N-linked glycan protein acceptor through alpha-2,8-linkages. Therefore, participates in polysialic acid synthesis on various sialylated N-acetyllactosaminyl oligosaccharides, including NCAM1 N-glycans, FETUB N-glycans and AHSG. It is noteworthy that alpha-2,3-linked sialic acid is apparently a better acceptor than alpha-2,6-linked sialic acid. This chain is CMP-N-acetylneuraminate-poly-alpha-2,8-sialyltransferase, found in Cricetulus griseus (Chinese hamster).